The following is a 333-amino-acid chain: Salivary glue protein Sgs-3 (333 aa).

The N-terminal stretch at methionine 1 to glycine 23 is a signal peptide. Residues threonine 51–cysteine 285 form a disordered region. Over residues cysteine 60–arginine 73 the composition is skewed to pro residues. Positions proline 74–proline 88 are enriched in low complexity. The segment covering threonine 89–threonine 277 has biased composition (basic residues).

The sequence is that of Salivary glue protein Sgs-3 (Sgs3) from Drosophila erecta (Fruit fly).